The following is a 360-amino-acid chain: Mannose-1-phosphate guanylyltransferase catalytic subunit beta (360 aa).

The segment at 2–222 (KALILVGGYG…QGFWMDIGQP (221 aa)) is substrate-binding domain. Residue aspartate 110 participates in GDP-alpha-D-mannose binding. Position 110 (aspartate 110) interacts with Mg(2+). The active site involves lysine 162. Position 218 (aspartate 218) interacts with GDP-alpha-D-mannose. Mg(2+) is bound at residue aspartate 218. The interval 245 to 360 (HVGPGFIGNV…ESVPEPRIIM (116 aa)) is hexapeptide repeat domain.

The protein belongs to the transferase hexapeptide repeat family. As to quaternary structure, component of the GMPPA-GMPPB mannose-1-phosphate guanylyltransferase complex composed of 4 gmppa subunits and 8 gmppb subunits; the complex is organized into three layers, a central layer made up of 2 gmppa dimers sandwiched between two layers each made up of 2 gmppb dimers. Catalytic activity of gmppb is reduced when part of the complex and binding of GDP-alpha-D-Mannose by gmppa induces allosteric feedback inhibition of gmppb. It depends on Mg(2+) as a cofactor.

The catalysed reaction is alpha-D-mannose 1-phosphate + GTP + H(+) = GDP-alpha-D-mannose + diphosphate. It functions in the pathway nucleotide-sugar biosynthesis; GDP-alpha-D-mannose biosynthesis; GDP-alpha-D-mannose from alpha-D-mannose 1-phosphate (GTP route): step 1/1. Its activity is regulated as follows. Enzyme activity is reduced by incorporation into the GMPPA-GMPPB mannose-1-phosphate guanylyltransferase complex. Allosterically inhibited, when part of the GMPPA-GMPPB complex, by GDP-alpha-D-mannose binding to GMPPA. In terms of biological role, catalytic subunit of the GMPPA-GMPPB mannose-1-phosphate guanylyltransferase complex. Catalyzes the formation of GDP-mannose, an essential precursor of glycan moieties of glycoproteins and glycolipids. Can catalyze the reverse reaction in vitro. Together with GMPPA regulates GDP-alpha-D-mannose levels. The protein is Mannose-1-phosphate guanylyltransferase catalytic subunit beta (gmppb) of Xenopus tropicalis (Western clawed frog).